Here is a 187-residue protein sequence, read N- to C-terminus: ATP synthase subunit b 2 (187 aa).

Polar residues predominate over residues 1–13 (MAESHATGTTTHT). A disordered region spans residues 1-21 (MAESHATGTTTHTEVPHGKPE). Residues 31 to 53 (ASQLVSFAIAFALLYVIVSRFAL) traverse the membrane as a helical segment.

The protein belongs to the ATPase B chain family. F-type ATPases have 2 components, F(1) - the catalytic core - and F(0) - the membrane proton channel. F(1) has five subunits: alpha(3), beta(3), gamma(1), delta(1), epsilon(1). F(0) has three main subunits: a(1), b(2) and c(10-14). The alpha and beta chains form an alternating ring which encloses part of the gamma chain. F(1) is attached to F(0) by a central stalk formed by the gamma and epsilon chains, while a peripheral stalk is formed by the delta and b chains.

The protein resides in the cell inner membrane. Its function is as follows. F(1)F(0) ATP synthase produces ATP from ADP in the presence of a proton or sodium gradient. F-type ATPases consist of two structural domains, F(1) containing the extramembraneous catalytic core and F(0) containing the membrane proton channel, linked together by a central stalk and a peripheral stalk. During catalysis, ATP synthesis in the catalytic domain of F(1) is coupled via a rotary mechanism of the central stalk subunits to proton translocation. In terms of biological role, component of the F(0) channel, it forms part of the peripheral stalk, linking F(1) to F(0). The b'-subunit is a diverged and duplicated form of b found in plants and photosynthetic bacteria. The polypeptide is ATP synthase subunit b 2 (atpF2) (Afipia carboxidovorans (strain ATCC 49405 / DSM 1227 / KCTC 32145 / OM5) (Oligotropha carboxidovorans)).